Reading from the N-terminus, the 251-residue chain is DNA repair protein RecO (251 aa).

This sequence belongs to the RecO family.

Functionally, involved in DNA repair and RecF pathway recombination. This is DNA repair protein RecO from Albidiferax ferrireducens (strain ATCC BAA-621 / DSM 15236 / T118) (Rhodoferax ferrireducens).